Reading from the N-terminus, the 650-residue chain is GATA zinc finger domain-containing protein 11 (650 aa).

Residues 16-79 (LYNNTNTNSN…NSSNSLSSSF (64 aa)) are compositionally biased toward low complexity. Disordered regions lie at residues 16 to 96 (LYNN…SGYN), 111 to 181 (KRSN…TTPL), 221 to 335 (NNSN…NNNK), and 409 to 515 (RIFG…NKRK). Polar residues predominate over residues 116-129 (LDDNMSVPTLQNFT). 2 stretches are compositionally biased toward low complexity: residues 130-180 (NNNN…PTTP) and 221-260 (NNSN…NNNN). Residues 261–272 (QSIVPQSIHLQS) are compositionally biased toward polar residues. Low complexity predominate over residues 273 to 334 (TTPQIQPLSL…NNSYNTNNNN (62 aa)). A compositionally biased stretch (basic residues) spans 425 to 434 (RPRRFRKSKV). A compositionally biased stretch (low complexity) spans 442 to 511 (HNNNNNNINN…GNGNTNSTNN (70 aa)). Residues 522 to 547 (CTSCGTTSSPEWRKGPAGNQSLCNAC) form a GATA-type zinc finger. A disordered region spans residues 619-650 (QQQQQQQQQQQNHHHQQLQQQQQQQQQQQLHH).

In terms of biological role, transcription factor that regulates morphogenetic cell movement during development. This chain is GATA zinc finger domain-containing protein 11 (gtaK), found in Dictyostelium discoideum (Social amoeba).